We begin with the raw amino-acid sequence, 470 residues long: 6-phospho-beta-galactosidase (470 aa).

The D-galactose 6-phosphate site is built by Gln-19, His-116, Asn-159, Glu-160, and Asn-297. Residue Glu-160 is the Proton donor of the active site. The active-site Nucleophile is Glu-375. Residues Ser-430, Trp-431, Lys-437, and Tyr-439 each coordinate D-galactose 6-phosphate.

This sequence belongs to the glycosyl hydrolase 1 family.

The enzyme catalyses a 6-phospho-beta-D-galactoside + H2O = D-galactose 6-phosphate + an alcohol. It functions in the pathway carbohydrate metabolism; lactose degradation; D-galactose 6-phosphate and beta-D-glucose from lactose 6-phosphate: step 1/1. The polypeptide is 6-phospho-beta-galactosidase (Staphylococcus aureus (strain COL)).